A 900-amino-acid polypeptide reads, in one-letter code: Xylanolytic transcriptional activator xlnR (900 aa).

The segment covering 53 to 71 (SREGGNSENNSTFKPSSVR) has biased composition (polar residues). A disordered region spans residues 53-75 (SREGGNSENNSTFKPSSVRDSLA). The zn(2)-C6 fungal-type DNA-binding region spans 98–124 (CDQCNQLRTKCDGQNPCAHCIEFGLTC). Disordered regions lie at residues 137–169 (SKKD…QEPG), 520–559 (ELPP…NVTE), and 701–722 (EPPE…STVG). The span at 531–542 (DGERENEGDNPS) shows a compositional bias: basic and acidic residues. A compositionally biased stretch (polar residues) spans 543-557 (KRNQSLHGGNSNVNV). Residues 712–722 (SPSGRSSSTVG) are compositionally biased toward low complexity.

Belongs to the xlnR/xlr1 family.

Its subcellular location is the nucleus. Its function is as follows. Transcriptional activator of the xylanolytic system. Involved in the regulation of extracellular cellulolytic and xylanolytic genes and in the regulation of the intracellular activities of D-xylose catabolic genes in the pentose catabolic pathway (PCP) in response to the presence of D-xylose. Binds to the DNA sequence 5'-GGNTAAA-3'. This is Xylanolytic transcriptional activator xlnR (xlnR) from Emericella nidulans (strain FGSC A4 / ATCC 38163 / CBS 112.46 / NRRL 194 / M139) (Aspergillus nidulans).